Reading from the N-terminus, the 306-residue chain is SPbeta prophage-derived uncharacterized protein YonG (306 aa).

This is SPbeta prophage-derived uncharacterized protein YonG (yonG) from Bacillus subtilis (strain 168).